Here is a 277-residue protein sequence, read N- to C-terminus: 2,5-diketo-D-gluconic acid reductase B (277 aa).

The active-site Proton donor is the tyrosine 51. Histidine 109 contributes to the substrate binding site. 189–242 (SPLARRSELLTEQLLQELAVVYGVTPTQVVLRWHVQLGSTPIPKSADPDRQREN) serves as a coordination point for NADP(+).

Belongs to the aldo/keto reductase family.

The protein resides in the cytoplasm. The enzyme catalyses 2-dehydro-D-gluconate + NADP(+) = 2,5-didehydro-D-gluconate + NADPH + H(+). Catalyzes the reduction of 2,5-diketo-D-gluconic acid (25DKG) to 2-keto-L-gulonic acid (2KLG). 25DKGR-B has higher catalytic efficiency than 25DKGR-A. This is 2,5-diketo-D-gluconic acid reductase B (dkgB) from Corynebacterium sp. (strain SHS752001).